The chain runs to 101 residues: Urease subunit beta (101 aa).

The protein belongs to the urease beta subunit family. Heterotrimer of UreA (gamma), UreB (beta) and UreC (alpha) subunits. Three heterotrimers associate to form the active enzyme.

It localises to the cytoplasm. The enzyme catalyses urea + 2 H2O + H(+) = hydrogencarbonate + 2 NH4(+). The protein operates within nitrogen metabolism; urea degradation; CO(2) and NH(3) from urea (urease route): step 1/1. The chain is Urease subunit beta from Psychromonas ingrahamii (strain DSM 17664 / CCUG 51855 / 37).